The chain runs to 365 residues: Aminotransferase poxL (365 aa).

Arg-92 provides a ligand contact to pyridoxal 5'-phosphate. The residue at position 193 (Lys-193) is an N6-(pyridoxal phosphate)lysine. Glu-229 is a pyridoxal 5'-phosphate binding site.

This sequence belongs to the class-IV pyridoxal-phosphate-dependent aminotransferase family. Pyridoxal 5'-phosphate is required as a cofactor.

Its pathway is secondary metabolite biosynthesis. Functionally, aminotransferase; part of the gene cluster that mediates the biosynthesis of oxaleimides, cytotoxic compounds containing an unusual disubstituted succinimide moiety. The first step of the pathway is provided by the HR-PKS poxF that serves in a new mode of collaborative biosynthesis with the PKS-NRPS poxE, by providing the olefin containing amino acid substrate via the synthesis of an ACP-bound dec-4-enoate. The cytochrome P450 monooxygenase poxM-catalyzed oxidation at the alpha-position creates the enzyme-bound 2-hydroxydec-4-enoyl-ACP thioester, which may be prone to spontaneous hydrolysis to yield 2-hydroxydec-4-enoic acid due to increased electrophilicity of the carbonyl. 2-hydroxydec-4-enoic acid can then be further oxidized by poxM to yield the alpha-ketoacid 2-oxodec-4-enoicacid, which is reductively aminated by the aminotransferase poxL to yield (S,E)-2-aminodec-4-enoic acid. The Hybrid PKS-NRPS synthetase poxE then performs condensation between the octaketide product of its PKS modules and the amino group of (S,E)-2-aminodec-4-enoic acid which is activated and incorporated by the adenylation domain. The resulting aminoacyl product can be cyclized by the Diels-Alderase PoxQ and reductively released by the reductive (R) domain of poxE to yield an aldehyde intermediate. The released aldehyde is then substrate for a Knoevenagel condensation by the hydrolyase poxO followed by an oxidation at the 5-position of the pyrrolidone ring. The presence of the olefin from the amino acid building block allows for migration of the substituted allyl group to occur. This allylic transposition reaction takes place in a conjugate addition, semipinacol-like fashion to yield a succinimide intermediate. Iterative two-electron oxidations of the C7 methyl of the succinimide intermediate to the carboxylic acid can be catalyzed by one of two remaining cytochrome P450 monooxygenasess poxC or poxD to yield oxaleimide A. Subsequent oxidation yields the maleimide scaffold oxaleimide I. Both oxaleimide A and oxaleimide I can undergo oxidative modifications in the decalin ring to yield the series of products oxaleimides B to H. The chain is Aminotransferase poxL from Penicillium oxalicum (strain 114-2 / CGMCC 5302) (Penicillium decumbens).